Here is a 118-residue protein sequence, read N- to C-terminus: Large ribosomal subunit protein bL19 (118 aa).

It belongs to the bacterial ribosomal protein bL19 family.

In terms of biological role, this protein is located at the 30S-50S ribosomal subunit interface and may play a role in the structure and function of the aminoacyl-tRNA binding site. The sequence is that of Large ribosomal subunit protein bL19 (rplS) from Serratia marcescens.